Here is a 464-residue protein sequence, read N- to C-terminus: Aspartyl protease 37 (464 aa).

The N-terminal stretch at 1–19 is a signal peptide; it reads MNAAVLLLLLALAALPASC. Asparagine 41 carries an N-linked (GlcNAc...) asparagine glycan. In terms of domain architecture, Peptidase A1 spans 89–456; it reads YLVKLGIGTP…NLRRGRVTFV (368 aa). The active site involves aspartate 107. A disulfide bridge links cysteine 117 with cysteine 123. N-linked (GlcNAc...) asparagine glycosylation is found at asparagine 174 and asparagine 261. Residues 299–311 are compositionally biased toward low complexity; the sequence is TTTTTATATATAP. Residues 299-319 form a disordered region; the sequence is TTTTTATATATAPAPAPTPSP. Asparagine 320 is a glycosylation site (N-linked (GlcNAc...) asparagine). Residue aspartate 337 is part of the active site. Cysteine 376 and cysteine 420 are oxidised to a cystine.

This sequence belongs to the peptidase A1 family.

Anther-specific aspartic protease involved in tapetal programmed cell death (PCD). Directly regulated by the transcription factor EAT1/DTD in anthers during tapetum PCD and degeneration. The chain is Aspartyl protease 37 from Oryza sativa subsp. japonica (Rice).